We begin with the raw amino-acid sequence, 351 residues long: NADP-dependent isopropanol dehydrogenase (351 aa).

Zn(2+)-binding residues include C37, H59, E60, and D150. NADP(+)-binding positions include 175 to 178, 198 to 200, Y218, 265 to 267, and K340; these read IGAV, GSR, and INY.

The protein belongs to the zinc-containing alcohol dehydrogenase family. In terms of assembly, homotetramer. Requires Zn(2+) as cofactor.

It carries out the reaction propan-2-ol + NADP(+) = acetone + NADPH + H(+). Alcohol dehydrogenase with a preference for medium chain secondary alcohols, such as 2-butanol and isopropanol. Has very low activity with primary alcohols, such as ethanol. Under physiological conditions, the enzyme reduces aldehydes and 2-ketones to produce secondary alcohols. Is active with acetaldehyde and propionaldehyde. This is NADP-dependent isopropanol dehydrogenase (adh) from Clostridium beijerinckii (Clostridium MP).